A 917-amino-acid chain; its full sequence is Auxin response factor 17 (917 aa).

A DNA-binding region (TF-B3) is located at residues F134–N236. Residues S571–P649 form a disordered region. Low complexity-rich tracts occupy residues L576–Q594 and S604–T620. Positions A786 to E870 constitute a PB1 domain.

The protein belongs to the ARF family. In terms of assembly, homodimers and heterodimers. In terms of tissue distribution, expressed in roots, culms, leaves and young panicles.

The protein resides in the nucleus. Functionally, auxin response factors (ARFs) are transcriptional factors that bind specifically to the DNA sequence 5'-TGTCTC-3' found in the auxin-responsive promoter elements (AuxREs). The chain is Auxin response factor 17 (ARF17) from Oryza sativa subsp. japonica (Rice).